We begin with the raw amino-acid sequence, 411 residues long: Argininosuccinate synthase (411 aa).

ATP contacts are provided by residues 10-18 (AYSGGLDTS) and Ala-37. L-citrulline is bound by residues Tyr-89 and Ser-94. Gly-119 contacts ATP. Residues Thr-121, Asn-125, and Asp-126 each coordinate L-aspartate. Asn-125 provides a ligand contact to L-citrulline. L-citrulline is bound by residues Arg-129, Ser-178, Ser-187, Glu-263, and Tyr-275.

Belongs to the argininosuccinate synthase family. Type 1 subfamily. Homotetramer.

It localises to the cytoplasm. The enzyme catalyses L-citrulline + L-aspartate + ATP = 2-(N(omega)-L-arginino)succinate + AMP + diphosphate + H(+). Its pathway is amino-acid biosynthesis; L-arginine biosynthesis; L-arginine from L-ornithine and carbamoyl phosphate: step 2/3. The chain is Argininosuccinate synthase from Aeromonas salmonicida (strain A449).